Consider the following 213-residue polypeptide: Ras-related protein Rab-39B (213 aa).

7 residues coordinate GTP: serine 17, glycine 20, lysine 21, serine 22, cysteine 23, serine 37, and threonine 40. Serine 22 lines the Mg(2+) pocket. The interval 35–43 (QVSDPTVGV) is switch-I. Mg(2+)-binding residues include threonine 40 and aspartate 64. Residues glycine 67, histidine 123, lysine 124, aspartate 126, alanine 154, and arginine 155 each contribute to the GTP site. Residues 67 to 83 (GQERFRSITRAYYRNSV) are switch-II. Serine 201 bears the Phosphoserine mark. S-geranylgeranyl cysteine attachment occurs at residues cysteine 211 and cysteine 213. Cysteine 213 is modified (cysteine methyl ester).

It belongs to the small GTPase superfamily. Rab family. In terms of assembly, interacts (GDP-bound) with C9orf72; C9orf72 in complex with SMCR8 acts as a GEF for RAB39B. Interacts (in GTP-bound form) with PICK1 (via PDZ domain); a PICK1 homodimer may allow simultaneous association of RAB39B and GRIA2 to PICK1 which is involved in GRIA2 trafficking. Interacts with isoform c of RASSF1; the interaction is strong. Interacts with isoform a of RASSF1; the interaction is weak. Interacts with the DLG4/PSD-95. Interacts (GTP-bound) with HOPS complex components VPS39 and VPS41. Mg(2+) serves as cofactor. As to expression, highly expressed in the brain.

It localises to the cell membrane. It is found in the cytoplasmic vesicle membrane. The protein localises to the golgi apparatus. Its subcellular location is the cytoplasmic vesicle. The protein resides in the autophagosome membrane. It localises to the autolysosome membrane. It carries out the reaction GTP + H2O = GDP + phosphate + H(+). Its activity is regulated as follows. Regulated by guanine nucleotide exchange factors (GEFs) including C9orf72-SMCR8 complex, which promote the exchange of bound GDP for free GTP. Regulated by GTPase activating proteins (GAPs) which increase the GTP hydrolysis activity. Inhibited by GDP dissociation inhibitors (GDIs). Functionally, the small GTPases Rab are key regulators of intracellular membrane trafficking, from the formation of transport vesicles to their fusion with membranes. Rabs cycle between an inactive GDP-bound form and an active GTP-bound form that is able to recruit to membranes different sets of downstream effectors directly responsible for vesicle formation, movement, tethering and fusion. RAB39B is involved in autophagy and may function in autophagosome formation. Binds downstream effector PICK1 to ensure selectively GRIA2 exit from the endoplasmic reticulum to the Golgi and to regulate AMPAR composition at the post-synapses and thus synaptic transmission. May regulate the homeostasis of SNCA/alpha-synuclein. This is Ras-related protein Rab-39B from Homo sapiens (Human).